A 459-amino-acid chain; its full sequence is NADH oxidase (459 aa).

FAD is bound at residue asparagine 10. The Proton acceptor role is filled by histidine 11. The FAD site is built by alanine 12, aspartate 34, glutamine 35, cysteine 44, valine 81, alanine 110, serine 113, lysine 143, and tyrosine 172. Cysteine 44 functions as the Redox-active in the catalytic mechanism. Cysteine sulfinic acid (-SO2H) is present on cysteine 44. Isoleucine 173, aspartate 192, tyrosine 201, and glycine 256 together coordinate NAD(+). Aspartate 294 provides a ligand contact to FAD. Alanine 310 provides a ligand contact to NAD(+). FAD is bound by residues leucine 311, alanine 312, and serine 313. Position 341 (glycine 341) interacts with NAD(+). Residue phenylalanine 439 participates in FAD binding.

This sequence belongs to the class-III pyridine nucleotide-disulfide oxidoreductase family. FAD is required as a cofactor.

Its subcellular location is the secreted. The protein localises to the cell wall. It catalyses the reaction 2 NADH + O2 + 2 H(+) = 2 NAD(+) + 2 H2O. Functionally, catalyzes the four-electron reduction of molecular oxygen to water. Plays a role in redox balance maintenance. May be involved in mediating bacterial adhesion to host cells. May be considered a potential virulence factor. This Streptococcus pneumoniae (strain ATCC BAA-255 / R6) protein is NADH oxidase.